A 381-amino-acid polypeptide reads, in one-letter code: Neuropeptide Y receptor type 2 (381 aa).

The segment at 1–37 (MGPVGAEADENQTVEVKVEPYGPGHTTPRGELPPDPE) is disordered. Over 1–51 (MGPVGAEADENQTVEVKVEPYGPGHTTPRGELPPDPEPELIDSTKLVEVQV) the chain is Extracellular. Residue Asn-11 is glycosylated (N-linked (GlcNAc...) asparagine). Residues 52-72 (ILILAYCSIILLGVVGNSLVI) form a helical membrane-spanning segment. Residues 73-86 (HVVIKFKSMRTVTN) are Cytoplasmic-facing. Residues 87–107 (FFIANLAVADLLVNTLCLPFT) form a helical membrane-spanning segment. The Extracellular portion of the chain corresponds to 108–124 (LTYTLMGEWKMGPVLCH). The cysteines at positions 123 and 203 are disulfide-linked. The chain crosses the membrane as a helical span at residues 125-145 (LVPYAQGLAVQVSTITLTVIA). Residues 146-165 (LDRHRCIVYHLESKISKRIS) lie on the Cytoplasmic side of the membrane. A helical membrane pass occupies residues 166–186 (FLIIGLAWGISALLASPLAIF). The Extracellular segment spans residues 187–216 (REYSLIEIIPDFEIVACTEKWPGEEKSVYG). A helical membrane pass occupies residues 217–237 (TVYSLSTLLILYVLPLGIISF). The Cytoplasmic portion of the chain corresponds to 238 to 268 (SYTRIWSKLRNHVSPGAASDHYHQRRHKMTK). A helical membrane pass occupies residues 269–289 (MLVCVVVVFAVSWLPLHAFQL). Over 290–304 (AVDIDSHVLDLKEYK) the chain is Extracellular. A helical membrane pass occupies residues 305 to 325 (LIFTVFHIIAMCSTFANPLLY). The Cytoplasmic segment spans residues 326-381 (GWMNSNYRKAFLSAFRCEQRLDAIHSEVSMTFKAKKNLEVKKNNGPTDSFSEATNV). Residue Cys-342 is the site of S-palmitoyl cysteine attachment.

Belongs to the G-protein coupled receptor 1 family.

The protein localises to the cell membrane. Receptor for neuropeptide Y and peptide YY. This is Neuropeptide Y receptor type 2 (Npy2r) from Mus musculus (Mouse).